A 1040-amino-acid polypeptide reads, in one-letter code: Multidrug resistance protein MdtB (1040 aa).

12 helical membrane passes run 16-36 (FIMR…AGII), 347-367 (LMMA…NIPA), 369-389 (IIPG…MVFL), 396-416 (LTLM…IVVI), 440-460 (IGFT…PLLF), 472-492 (FAIT…TLTP), 537-557 (WLTL…WVFI), 863-883 (LGST…VLGI), 888-908 (FIHP…ALLA), 911-931 (IAGS…IGIV), 968-988 (ILMT…STGV), and 998-1018 (IGMV…TPVI).

Belongs to the resistance-nodulation-cell division (RND) (TC 2.A.6) family. MdtB subfamily. Part of a tripartite efflux system composed of MdtA, MdtB and MdtC. MdtB forms a heteromultimer with MdtC.

The protein resides in the cell inner membrane. Its function is as follows. The MdtABC tripartite complex confers resistance against novobiocin and deoxycholate. This Escherichia coli O157:H7 (strain EC4115 / EHEC) protein is Multidrug resistance protein MdtB.